The chain runs to 153 residues: CRIB domain-containing protein RIC4 (153 aa).

In terms of domain architecture, CRIB spans 99–112 (IGVPTNVKHVSHIG).

Interacts with ARAC4/ROP2 and ARAC11/ROP1. As to expression, expressed in roots, leaves, stems, flowers, siliques and pollen.

It is found in the cell membrane. In terms of biological role, functions as a downstream effector of Rho-related GTP binding proteins of the 'Rho of Plants' (ROPs) family. Participates in the propagation of ROP GTPase signals in specific cellular responses. Required for actin cortical microfilament assembly. Activated by ARAC4/ROP2 to promote the assembly of cortical actin microfilaments required for lobe formation and lateral expansion of pavement cells. Interaction with, and activation by ARAC4/ROP2 is inhibited by RIC1. Functions as a downstream effector of ARAC11/ROP1 to promote the assembly of apical F-actin associated with vesicle accumulation in the tip of the growing pollen tube. Counteracts the ARAC11/ROP1-RIC3 pathway, which activates calcium signaling that leads to apical F-actin disassembly associated with exocytosis, to control actin dynamics and pollen tube apical growth. Downstream of ARAC11/ROP1, is involved in the growth responses to the root-colonizing endophytic fungus P.indica. In Arabidopsis thaliana (Mouse-ear cress), this protein is CRIB domain-containing protein RIC4 (RIC4).